The sequence spans 321 residues: PI-PLC X domain-containing protein 3 (321 aa).

A PI-PLC X-box domain is found at 22-197 (SIHSIPLTNL…DYQVLVFYHS (176 aa)). Catalysis depends on residues His37 and His114.

In terms of tissue distribution, widely expressed, with highest levels in brain, followed by heart atrium. Not detected in small intestine, nor stomach.

The protein localises to the cytoplasm. This chain is PI-PLC X domain-containing protein 3 (Plcxd3), found in Mus musculus (Mouse).